Consider the following 283-residue polypeptide: CASP-like protein 4A3 (283 aa).

The disordered stretch occupies residues 1 to 86; the sequence is MRSPAKTMPS…VEETPSPIVV (86 aa). Over 1–135 the chain is Cytoplasmic; that stretch reads MRSPAKTMPS…SRREEVVKFS (135 aa). Low complexity predominate over residues 9 to 20; the sequence is PSMSPSSVSTEK. Residues 50 to 79 are compositionally biased toward basic and acidic residues; it reads SLDHSSESEKEDAKSKPESRRNKNPGKVEE. The chain crosses the membrane as a helical span at residues 136–156; it reads ALGFRLSEVVLALISFSIMAA. Topologically, residues 157-174 are extracellular; the sequence is DKTKGWSGDSFDRYKEYR. A helical membrane pass occupies residues 175–195; that stretch reads FCLSVNVVAFVYSSFQACDLA. Residues 196 to 212 are Cytoplasmic-facing; it reads YHLVKEKHLISHHLRPL. The chain crosses the membrane as a helical span at residues 213–233; it reads FEFIIDQVLAYLLMSASTAAV. At 234-251 the chain is on the extracellular side; the sequence is TRVDDWVSNWGKDEFTEM. Residues 252 to 272 form a helical membrane-spanning segment; the sequence is ASASIAMSFLAFLAFAFSSLI. Residues 273-283 are Cytoplasmic-facing; that stretch reads SGYNLFNQGSL.

It belongs to the Casparian strip membrane proteins (CASP) family. As to quaternary structure, homodimer and heterodimers.

Its subcellular location is the cell membrane. This Arabidopsis thaliana (Mouse-ear cress) protein is CASP-like protein 4A3.